A 1348-amino-acid chain; its full sequence is Vascular endothelial growth factor receptor 2 (1348 aa).

A signal peptide spans 1–20; sequence MELGPLRVLTVLLCLAPVFA. The Extracellular portion of the chain corresponds to 21-756; sequence GLFISMDQPT…GAEEKTNLEL (736 aa). 20 N-linked (GlcNAc...) asparagine glycosylation sites follow: Asn-43, Asn-47, Asn-63, Asn-93, Asn-138, Asn-153, Asn-201, Asn-240, Asn-290, Asn-310, Asn-365, Asn-386, Asn-513, Asn-556, Asn-603, Asn-613, Asn-622, Asn-666, Asn-688, and Asn-710. 7 Ig-like C2-type domains span residues 43 to 106, 138 to 202, 220 to 312, 320 to 405, 412 to 534, 540 to 651, and 658 to 744; these read NDTL…GDSQ, NKTV…IDNE, DLTM…KNSS, PFIH…HTFT, PQIG…RVIS, GLEI…KHLT, and PRLV…AFFS. An intrachain disulfide couples Cys-50 to Cys-100. A disulfide bridge links Cys-145 with Cys-195. A disulfide bond links Cys-241 and Cys-299. An intrachain disulfide couples Cys-436 to Cys-520. Cys-561 and Cys-633 are oxidised to a cystine. A disulfide bridge connects residues Cys-679 and Cys-728. A helical membrane pass occupies residues 757–777; that stretch reads IILVGTAVIAMFFWLLLVIIL. Residues 778–1348 are Cytoplasmic-facing; sequence RTVKRANGGD…SPAPVASLPL (571 aa). Residues 825 to 1155 enclose the Protein kinase domain; it reads LKLGKPLGRG…FSELVEHLGN (331 aa). ATP is bound by residues 831–839 and Lys-859; that span reads LGRGAFGQV. The span at 958 to 967 shows a compositional bias: low complexity; the sequence is ITSSQSSTSS. The segment at 958–983 is disordered; that stretch reads ITSSQSSTSSGFVEERSLSDVEEEDA. Residue Asp-1021 is the Proton acceptor of the active site. 4 positions are modified to phosphotyrosine; by autocatalysis: Tyr-1047, Tyr-1052, Tyr-1168, and Tyr-1207. The tract at residues 1280-1302 is disordered; that stretch reads PSKSNESVMSEASNQTSGYQSGY.

Belongs to the protein kinase superfamily. Tyr protein kinase family. CSF-1/PDGF receptor subfamily. In terms of processing, autophosphorylated on tyrosine residues upon ligand binding. Autophosphorylation occurs in trans, i.e. one subunit of the dimeric receptor phosphorylates tyrosine residues on the other subunit. In terms of tissue distribution, in all endothelial tissues during onset of vascularization. In later development, present in lung, heart, intestine and skin.

The protein resides in the cell membrane. The protein localises to the cytoplasmic vesicle. Its subcellular location is the early endosome. It is found in the cell junction. It localises to the endoplasmic reticulum. The enzyme catalyses L-tyrosyl-[protein] + ATP = O-phospho-L-tyrosyl-[protein] + ADP + H(+). Present in an inactive conformation in the absence of bound ligand. Binding of VEGFA, VEGFC or VEGFD leads to dimerization and activation by autophosphorylation on tyrosine residues. Functionally, tyrosine-protein kinase that acts as a cell-surface receptor for VEGFA, VEGFC and/or VEGFD and plays an essential role in the regulation of angiogenesis and vascular development. Promotes proliferation, survival, migration and differentiation of endothelial cells. Promotes reorganization of the actin cytoskeleton. Binding of vascular growth factors leads to the activation of several signaling cascades. Activation of PLCG1 leads to the production of the cellular signaling molecules diacylglycerol and inositol 1,4,5-trisphosphate and the activation of protein kinase C. Mediates activation of MAPK1/ERK2, MAPK3/ERK1 and the MAP kinase signaling pathway, as well as of the AKT1 signaling pathway. Mediates phosphorylation of PIK3R1, the regulatory subunit of phosphatidylinositol 3-kinase, reorganization of the actin cytoskeleton and activation of PTK2/FAK1. Required for VEGFA-mediated induction of NOS2 and NOS3, leading to the production of the signaling molecule nitric oxide (NO) by endothelial cells. The chain is Vascular endothelial growth factor receptor 2 from Coturnix japonica (Japanese quail).